A 195-amino-acid chain; its full sequence is uncharacterized protein (195 aa).

A signal peptide spans 1–16; sequence MIRTIIVFMLLTISFG.

This is an uncharacterized protein from Acanthamoeba polyphaga mimivirus (APMV).